Consider the following 449-residue polypeptide: AP-4 complex subunit mu-1 (449 aa).

The MHD domain occupies 184–448 (KNEVFLDVVE…LSHSNAYVIR (265 aa)).

This sequence belongs to the adaptor complexes medium subunit family. As to quaternary structure, adaptor protein complex 4 (AP-4) is a heterotetramer composed of two large adaptins (epsilon-type subunit AP4E1 and beta-type subunit AP4B1), a medium adaptin (mu-type subunit AP4M1) and a small adaptin (sigma-type AP4S1). Interacts with tyrosine-based sorting signals on the cytoplasmic tail of cargo proteins such as APP, ATG9A, LAMP2 and NAGPA. Interacts with the C-terminal domain of GRID2. Interacts with GRIA1 and GRIA2; the interaction is indirect via CACNG3. Interacts with CACNG3; CACNG3 associates GRIA1 and GRIA2 with the adaptor protein complex 4 (AP-4) to target them to the somatodendritic compartment of neurons. Interacts with HOOK1 and HOOK2; the interactions are direct, mediate the interaction between FTS-Hook-FHIP (FHF) complex and AP-4 and the perinuclear distribution of AP-4.

It localises to the golgi apparatus. Its subcellular location is the trans-Golgi network membrane. The protein localises to the early endosome. In terms of biological role, component of the adaptor protein complex 4 (AP-4). Adaptor protein complexes are vesicle coat components involved both in vesicle formation and cargo selection. They control the vesicular transport of proteins in different trafficking pathways. AP-4 forms a non clathrin-associated coat on vesicles departing the trans-Golgi network (TGN) and may be involved in the targeting of proteins from the trans-Golgi network (TGN) to the endosomal-lysosomal system. It is also involved in protein sorting to the basolateral membrane in epithelial cells and the proper asymmetric localization of somatodendritic proteins in neurons. Within AP-4, the mu-type subunit AP4M1 is directly involved in the recognition and binding of tyrosine-based sorting signals found in the cytoplasmic part of cargos. The adaptor protein complex 4 (AP-4) may also recognize other types of sorting signal. The polypeptide is AP-4 complex subunit mu-1 (Mus musculus (Mouse)).